The primary structure comprises 203 residues: Recombination protein RecR (203 aa).

A C4-type zinc finger spans residues 56–71 (CTVCGNVSDDERCRIC). The Toprim domain occupies 79–179 (SVVCVVEEPK…TVTRIASGLP (101 aa)).

It belongs to the RecR family.

May play a role in DNA repair. It seems to be involved in an RecBC-independent recombinational process of DNA repair. It may act with RecF and RecO. This Mycobacterium leprae (strain TN) protein is Recombination protein RecR.